The sequence spans 394 residues: Elongation factor Tu 1 (394 aa).

A tr-type G domain is found at 10–204 (KPHVNVGTIG…FLDSYIPEPE (195 aa)). The segment at 19–26 (GHVDHGKT) is G1. Residue 19–26 (GHVDHGKT) coordinates GTP. Mg(2+) is bound at residue T26. Positions 60–64 (GITIN) are G2. The interval 81-84 (DCPG) is G3. GTP is bound by residues 81–85 (DCPGH) and 136–139 (NKCD). Residues 136–139 (NKCD) form a G4 region. The tract at residues 174–176 (SAL) is G5.

It belongs to the TRAFAC class translation factor GTPase superfamily. Classic translation factor GTPase family. EF-Tu/EF-1A subfamily. In terms of assembly, monomer.

It localises to the cytoplasm. It carries out the reaction GTP + H2O = GDP + phosphate + H(+). GTP hydrolase that promotes the GTP-dependent binding of aminoacyl-tRNA to the A-site of ribosomes during protein biosynthesis. This Shigella sonnei (strain Ss046) protein is Elongation factor Tu 1.